The sequence spans 657 residues: MGSGPADEEHTVDTEPGVSPPRRTVGGRETVRAAVVVGALGVVFGDIGTSPIYTIQTVFNPEDPHPVPISTNNVYGVVSLIFWSVMLIVTATYVLLVMRADNDGEGGVMALITLLRRMGAVRGSRVTAVLAGLGIFGAALFFGDSMITPAISVLSAVEGLKVVEPGLEEWIVPITAVIIVALFSVQRRGTAAVGRLFGPVMIVWFVSIGACGVSGIARHPEILKALSPTYALSFFFGHFGIAFFALAAVVLAVTGAEALYADMGHFGRRAITRGWLVLVLPACVLSYLGQGALLLGDQSAVSSPFFLLAPGWARWPMVLLATAATVIASQAVITGAYSVASQAAQLGYLPRLRVAHTSESTIGQIYVPWINWVLMVSVLTLVFAFRSSAALAYAFGMAVTGTITITTLLFFYIVRTRWGTPLWLVVCGAGCLLAVDLLFLAANLTKLVHGAWLPLLIALTAFTVMTTWQRGRAIVTRARERAEGSLGDFVGQLHDYRPPLVRVPGTAVFLNRGKQTAPLAMRANVEHNRVLQQHVVIMSINTLPVPRVPDTERTEIDKLGYAEDGIVHVTAFFGYMDAPNIPDVLRLLDPAETEGPIAVDSASYFLSKIELTMGTAPTMATWRKRLFIATSYITADAAEYFGLPGERTVIMGSRIDV.

Residues 1 to 25 (MGSGPADEEHTVDTEPGVSPPRRTV) form a disordered region. 12 helical membrane passes run 35 to 55 (VVVGALGVVFGDIGTSPIYTI), 77 to 97 (VVSLIFWSVMLIVTATYVLLV), 127 to 147 (TAVLAGLGIFGAALFFGDSMI), 165 to 185 (PGLEEWIVPITAVIIVALFSV), 196 to 216 (LFGPVMIVWFVSIGACGVSGI), 234 to 254 (FFFGHFGIAFFALAAVVLAVT), 275 to 295 (WLVLVLPACVLSYLGQGALLL), 315 to 335 (WPMVLLATAATVIASQAVITG), 365 to 385 (IYVPWINWVLMVSVLTLVFAF), 394 to 414 (AFGMAVTGTITITTLLFFYIV), 422 to 442 (LWLVVCGAGCLLAVDLLFLAA), and 447 to 467 (LVHGAWLPLLIALTAFTVMTT).

This sequence belongs to the HAK/KUP transporter (TC 2.A.72) family.

Its subcellular location is the cell membrane. The enzyme catalyses K(+)(in) + H(+)(in) = K(+)(out) + H(+)(out). Its function is as follows. Transport of potassium into the cell. Likely operates as a K(+):H(+) symporter. The polypeptide is Probable potassium transport system protein Kup (Rhodococcus jostii (strain RHA1)).